We begin with the raw amino-acid sequence, 209 residues long: Uracil phosphoribosyltransferase (209 aa).

5-phospho-alpha-D-ribose 1-diphosphate contacts are provided by residues Arg79, Arg104, and 131 to 139 (DPMLATGAS). Residues Ile194 and 199–201 (GDA) contribute to the uracil site. A 5-phospho-alpha-D-ribose 1-diphosphate-binding site is contributed by Asp200.

Belongs to the UPRTase family. The cofactor is Mg(2+).

The catalysed reaction is UMP + diphosphate = 5-phospho-alpha-D-ribose 1-diphosphate + uracil. Its pathway is pyrimidine metabolism; UMP biosynthesis via salvage pathway; UMP from uracil: step 1/1. Its activity is regulated as follows. Allosterically activated by GTP. Catalyzes the conversion of uracil and 5-phospho-alpha-D-ribose 1-diphosphate (PRPP) to UMP and diphosphate. The polypeptide is Uracil phosphoribosyltransferase (Staphylococcus saprophyticus subsp. saprophyticus (strain ATCC 15305 / DSM 20229 / NCIMB 8711 / NCTC 7292 / S-41)).